The following is a 34-amino-acid chain: MINWQVIGQLTSLAMIVLVGPAVIVVLSLRKGDL.

A helical transmembrane segment spans residues 6 to 26 (VIGQLTSLAMIVLVGPAVIVV).

Belongs to the Psb30/Ycf12 family. In terms of assembly, PSII is composed of 1 copy each of membrane proteins PsbA, PsbB, PsbC, PsbD, PsbE, PsbF, PsbH, PsbI, PsbJ, PsbK, PsbL, PsbM, PsbT, PsbX, PsbY, PsbZ, Psb30/Ycf12, peripheral proteins of the oxygen-evolving complex and a large number of cofactors. It forms dimeric complexes.

Its subcellular location is the plastid. It is found in the chloroplast thylakoid membrane. Functionally, a core subunit of photosystem II (PSII), probably helps stabilize the reaction center. In Gracilaria tenuistipitata var. liui (Red alga), this protein is Photosystem II reaction center protein Psb30.